We begin with the raw amino-acid sequence, 569 residues long: Spermatogenesis-associated protein 16 (569 aa).

Belongs to the SPATA16 family.

It localises to the golgi apparatus. The protein localises to the cytoplasmic vesicle. The protein resides in the secretory vesicle. Its subcellular location is the acrosome. Its function is as follows. Essential for spermiogenesis and male fertility. Involved in the formation of sperm acrosome during spermatogenesis. This Macaca fascicularis (Crab-eating macaque) protein is Spermatogenesis-associated protein 16 (SPATA16).